A 328-amino-acid chain; its full sequence is MQHLKELTEKARSALDALDQGLDALEEFRVEYFGKKGHFTALMQELRNVAAEERPAIGAKINEAKQTILDILNAKKEAWEQEALNAKLAAESIDVSLPGRKTELGGLHPVSITIERVVKFFSELGFTVASGPEIETDYYNFDALNIPAHHPARADHDTFWFDAQRLLRTQTSGVQIRTMENMQPPIRIVAPGRVYRNDYDQTHTPMFHQIELLYVDKKANFTELKGLIHDFLKAFFEEDLQVRFRPSFFPFTEPSAEVDVMRQNGKWLEVLGCGMVHPNVLRNVGIDPEEYSGFAVGMGVERLTMLRYNVTDLRSFFENDLRFLKQFK.

Glu-253 is a Mg(2+) binding site.

Belongs to the class-II aminoacyl-tRNA synthetase family. Phe-tRNA synthetase alpha subunit type 1 subfamily. As to quaternary structure, tetramer of two alpha and two beta subunits. The cofactor is Mg(2+).

The protein resides in the cytoplasm. The catalysed reaction is tRNA(Phe) + L-phenylalanine + ATP = L-phenylalanyl-tRNA(Phe) + AMP + diphosphate + H(+). This chain is Phenylalanine--tRNA ligase alpha subunit, found in Actinobacillus pleuropneumoniae serotype 7 (strain AP76).